The following is a 420-amino-acid chain: Gamma-glutamyl phosphate reductase (420 aa).

The protein belongs to the gamma-glutamyl phosphate reductase family.

It localises to the cytoplasm. The catalysed reaction is L-glutamate 5-semialdehyde + phosphate + NADP(+) = L-glutamyl 5-phosphate + NADPH + H(+). It functions in the pathway amino-acid biosynthesis; L-proline biosynthesis; L-glutamate 5-semialdehyde from L-glutamate: step 2/2. Functionally, catalyzes the NADPH-dependent reduction of L-glutamate 5-phosphate into L-glutamate 5-semialdehyde and phosphate. The product spontaneously undergoes cyclization to form 1-pyrroline-5-carboxylate. The sequence is that of Gamma-glutamyl phosphate reductase from Streptococcus pneumoniae serotype 19F (strain G54).